The chain runs to 512 residues: Ribonuclease Y (512 aa).

The chain crosses the membrane as a helical span at residues 2-22 (VGMYIIIPIVTFIIGGLLAWL). The KH domain occupies 202–262 (SITVFHIESD…VRREIARLAL (61 aa)). The region spanning 328 to 421 (LLQHARETAN…VQVCDAISGA (94 aa)) is the HD domain.

This sequence belongs to the RNase Y family.

It is found in the cell membrane. Endoribonuclease that initiates mRNA decay. The polypeptide is Ribonuclease Y (Parabacteroides distasonis (strain ATCC 8503 / DSM 20701 / CIP 104284 / JCM 5825 / NCTC 11152)).